A 354-amino-acid chain; its full sequence is Probable L-ascorbate-6-phosphate lactonase UlaG (354 aa).

The protein belongs to the UlaG family. The cofactor is a divalent metal cation.

It is found in the cytoplasm. The enzyme catalyses L-ascorbate 6-phosphate + H2O = 3-dehydro-L-gulonate 6-phosphate. It functions in the pathway cofactor degradation; L-ascorbate degradation; D-xylulose 5-phosphate from L-ascorbate: step 1/4. Its function is as follows. Probably catalyzes the hydrolysis of L-ascorbate-6-P into 3-keto-L-gulonate-6-P. Is essential for L-ascorbate utilization under anaerobic conditions. The sequence is that of Probable L-ascorbate-6-phosphate lactonase UlaG from Shigella boydii serotype 18 (strain CDC 3083-94 / BS512).